The sequence spans 548 residues: Ankyrin repeat domain-containing protein SOWAHA (548 aa).

The N-terminal stretch at 1-19 (MALAAAAAAAAAAAGVSQA) is a signal peptide. The interval 114 to 212 (EDNCAPGAPH…PPTAQVPPQK (99 aa)) is disordered. The span at 136–153 (SAPSELQHTPETLPSEVT) shows a compositional bias: polar residues. The span at 198–212 (GPEPAPPTAQVPPQK) shows a compositional bias: pro residues. Ser258 carries the post-translational modification Phosphoserine. ANK repeat units follow at residues 344-373 (SGFT…RGGA) and 383-413 (GGYT…QVHV). The tract at residues 512–548 (PRKKTKIRGGLPSFTEISHRSTPGPLAGLVPSLPPPT) is disordered.

The protein belongs to the SOWAH family.

The chain is Ankyrin repeat domain-containing protein SOWAHA (Sowaha) from Mus musculus (Mouse).